The primary structure comprises 218 residues: 25 kDa calcium-binding protein (218 aa).

EF-hand domains follow at residues 24 to 59, 66 to 101, 128 to 163, and 171 to 206; these read GAKTVARRIFENYDKGRKGRIENTDCVPMITEAYKS, PSSDDIKAYHRVLDRNGDGIVTYQDIEELCIRYLTG, AKLDVARRLFKRYDKDGSGQLQDDEIAGLLKDTYAE, and PTKEDVKIWLQMADTNSDGSVSLEEYEDLIIKSLQK. Ca(2+)-binding residues include D37, R43, D48, D79, N81, D83, D90, D141, D143, S145, Q147, E152, D184, N186, D188, S190, and E195.

Its function is as follows. Expected to play a crucial role in calcium-dependent regulation of ciliary movement. This Tetrahymena thermophila protein is 25 kDa calcium-binding protein.